The sequence spans 605 residues: YTH domain-containing protein ECT4 (605 aa).

2 disordered regions span residues Gly249–His274 and Glu357–Asp384. Over residues Lys256–His274 the composition is skewed to polar residues. A compositionally biased stretch (basic and acidic residues) spans Lys368 to Phe383. One can recognise a YTH domain in the interval Ala414–Phe551. Residues Lys420 to Tyr422, Asp426, Trp436 to Ala437, Asn469, Trp493, Trp498, and Trp506 each bind RNA. Residues Lys580 to Met605 are disordered.

In terms of tissue distribution, expressed in the shoot apex, at the sites of leaf formation, and in emerging leaves.

It localises to the cytoplasm. Specifically recognizes and binds N6-methyladenosine (m6A)-containing RNAs, and regulates mRNA stability. M6A is a modification present at internal sites of mRNAs and some non-coding RNAs and plays a role in mRNA stability and processing. Required for the correct timing of leaf formation and normal leaf morphology. The polypeptide is YTH domain-containing protein ECT4 (Arabidopsis thaliana (Mouse-ear cress)).